The sequence spans 358 residues: Histidinol-phosphate aminotransferase (358 aa).

Lysine 221 is subject to N6-(pyridoxal phosphate)lysine.

It belongs to the class-II pyridoxal-phosphate-dependent aminotransferase family. Histidinol-phosphate aminotransferase subfamily. Homodimer. It depends on pyridoxal 5'-phosphate as a cofactor.

The enzyme catalyses L-histidinol phosphate + 2-oxoglutarate = 3-(imidazol-4-yl)-2-oxopropyl phosphate + L-glutamate. Its pathway is amino-acid biosynthesis; L-histidine biosynthesis; L-histidine from 5-phospho-alpha-D-ribose 1-diphosphate: step 7/9. The polypeptide is Histidinol-phosphate aminotransferase (Caldicellulosiruptor saccharolyticus (strain ATCC 43494 / DSM 8903 / Tp8T 6331)).